Reading from the N-terminus, the 582-residue chain is ATP-dependent lipid A-core flippase (582 aa).

A run of 5 helical transmembrane segments spans residues 16–36, 63–83, 153–173, 253–273, and 275–295; these read LWPT…ALIL, VLVW…ITSY, IIGL…ILIV, PIIQ…ASFP, and VMDS…IALM. Residues 28-310 enclose the ABC transmembrane type-1 domain; that stretch reads IVAGVALILN…LTNVNAQFQR (283 aa). The ABC transporter domain occupies 342–578; that stretch reads VEFRNVTFTY…RGVYAQLHKM (237 aa). Position 376–383 (376–383) interacts with ATP; that stretch reads GRSGSGKS.

Belongs to the ABC transporter superfamily. Lipid exporter (TC 3.A.1.106) family. Homodimer.

The protein resides in the cell inner membrane. The catalysed reaction is ATP + H2O + lipid A-core oligosaccharideSide 1 = ADP + phosphate + lipid A-core oligosaccharideSide 2.. Its function is as follows. Involved in lipopolysaccharide (LPS) biosynthesis. Translocates lipid A-core from the inner to the outer leaflet of the inner membrane. Transmembrane domains (TMD) form a pore in the inner membrane and the ATP-binding domain (NBD) is responsible for energy generation. This Escherichia coli O157:H7 protein is ATP-dependent lipid A-core flippase.